The following is a 475-amino-acid chain: Glutamyl-tRNA(Gln) amidotransferase subunit A (475 aa).

Catalysis depends on charge relay system residues lysine 76 and serine 151. The Acyl-ester intermediate role is filled by serine 175.

The protein belongs to the amidase family. GatA subfamily. Heterotrimer of A, B and C subunits.

It catalyses the reaction L-glutamyl-tRNA(Gln) + L-glutamine + ATP + H2O = L-glutaminyl-tRNA(Gln) + L-glutamate + ADP + phosphate + H(+). Functionally, allows the formation of correctly charged Gln-tRNA(Gln) through the transamidation of misacylated Glu-tRNA(Gln) in organisms which lack glutaminyl-tRNA synthetase. The reaction takes place in the presence of glutamine and ATP through an activated gamma-phospho-Glu-tRNA(Gln). This Pelodictyon phaeoclathratiforme (strain DSM 5477 / BU-1) protein is Glutamyl-tRNA(Gln) amidotransferase subunit A.